A 280-amino-acid polypeptide reads, in one-letter code: 2,3,4,5-tetrahydropyridine-2,6-dicarboxylate N-succinyltransferase (280 aa).

The protein belongs to the transferase hexapeptide repeat family.

It is found in the cytoplasm. The catalysed reaction is (S)-2,3,4,5-tetrahydrodipicolinate + succinyl-CoA + H2O = (S)-2-succinylamino-6-oxoheptanedioate + CoA. Its pathway is amino-acid biosynthesis; L-lysine biosynthesis via DAP pathway; LL-2,6-diaminopimelate from (S)-tetrahydrodipicolinate (succinylase route): step 1/3. The sequence is that of 2,3,4,5-tetrahydropyridine-2,6-dicarboxylate N-succinyltransferase from Methylorubrum extorquens (strain PA1) (Methylobacterium extorquens).